We begin with the raw amino-acid sequence, 591 residues long: Aspartate--tRNA(Asp/Asn) ligase (591 aa).

Glutamate 175 contacts L-aspartate. Residues 199–202 (QQFK) are aspartate. L-aspartate is bound by residues arginine 221 and histidine 453. 221-223 (RDE) provides a ligand contact to ATP. Glutamate 486 is a binding site for ATP. Arginine 493 provides a ligand contact to L-aspartate. 538–541 (GIDR) serves as a coordination point for ATP.

Belongs to the class-II aminoacyl-tRNA synthetase family. Type 1 subfamily. Homodimer.

It is found in the cytoplasm. The enzyme catalyses tRNA(Asx) + L-aspartate + ATP = L-aspartyl-tRNA(Asx) + AMP + diphosphate. In terms of biological role, aspartyl-tRNA synthetase with relaxed tRNA specificity since it is able to aspartylate not only its cognate tRNA(Asp) but also tRNA(Asn). Reaction proceeds in two steps: L-aspartate is first activated by ATP to form Asp-AMP and then transferred to the acceptor end of tRNA(Asp/Asn). This is Aspartate--tRNA(Asp/Asn) ligase from Roseobacter denitrificans (strain ATCC 33942 / OCh 114) (Erythrobacter sp. (strain OCh 114)).